Reading from the N-terminus, the 398-residue chain is MSSLVLAINAGSSSLKFQLIRMPEETLVTKGLIERIGIKDSIFTIEVNGEKIKDVKDIKDHEEAINIMLDSFKQHGIIDDINDIAGTGHRVVHGGELFPTSALVTDKVEEQIESLSELAPLHNPANLMGIRAFRKLLPNIPHVAVFDTSFHQSMPEQSYLYSLPYQYYKDYGIRKYGFHGTSHKYVSQRAAEIMNKPIEELRIISCHIGNGASIAAIDGGESIDTSMGFTPLAGVTMGTRSGNIDPALIPFIMQKTGQNAEEVLNVLNKESGLLGISGTSSDLRDLESDAEEGKERAQLALDVFASRIHKYIGSYATRMHGVDVIVFTAGVGENSSTVRAKVLEGLEFMGIYWDPKKNETIRGEEGFINYPHSPVKVIVIPTNEEVMIARDTVKFGEL.

Residue Asn-9 coordinates Mg(2+). Lys-16 contacts ATP. Arg-90 serves as a coordination point for substrate. Asp-147 functions as the Proton donor/acceptor in the catalytic mechanism. Residues 207–211, 282–284, and 330–334 each bind ATP; these read HIGNG, DLR, and GVGEN. Glu-384 serves as a coordination point for Mg(2+).

Belongs to the acetokinase family. In terms of assembly, homodimer. Requires Mg(2+) as cofactor. The cofactor is Mn(2+).

Its subcellular location is the cytoplasm. The catalysed reaction is acetate + ATP = acetyl phosphate + ADP. Its pathway is metabolic intermediate biosynthesis; acetyl-CoA biosynthesis; acetyl-CoA from acetate: step 1/2. Functionally, catalyzes the formation of acetyl phosphate from acetate and ATP. Can also catalyze the reverse reaction. The protein is Acetate kinase of Staphylococcus haemolyticus (strain JCSC1435).